Consider the following 473-residue polypeptide: Vasculin (473 aa).

Disordered stretches follow at residues 1–25, 46–149, and 191–342; these read MAQHDFAPAWLNFPTPPSSTKSSLN, RHNS…REPN, and VGNL…QERD. Residue serine 49 is modified to Phosphoserine. An Omega-N-methylarginine modification is found at arginine 87. Residues 119-133 show a composition bias toward basic and acidic residues; that stretch reads ETGRKEDKRERKQFE. Composition is skewed to polar residues over residues 194-204 and 251-286; these read LPSQPVKNGTG and AFKSTAKNFSPSTNSVKECNRSNSSSPVDKLNQQPR. Phosphoserine occurs at positions 274, 276, 322, and 381. Residues 293-329 show a composition bias toward basic and acidic residues; it reads MRTDKKSEFLKALKRDRVEEEHEDESRAGSEKDDDSF. The segment at 444 to 473 is disordered; that stretch reads GPWKNSTFKPTTENDDTETSSSDTSDDDDV. Over residues 456–473 the composition is skewed to acidic residues; sequence ENDDTETSSSDTSDDDDV.

This sequence belongs to the vasculin family. In terms of assembly, interacts with GTF2B, GTF2F2, RNA polymerase II and TBP. As to expression, widely expressed. Some isoforms may be specifically expressed in veins and arteries (at protein level). Isoform 4 is widely expressed. Isoform 1, isoform 2 and isoform 3 may be specifically expressed in vascular smooth muscle cells.

The protein resides in the nucleus. The protein localises to the cytoplasm. Functions as a GC-rich promoter-specific transactivating transcription factor. This is Vasculin (GPBP1) from Homo sapiens (Human).